The sequence spans 289 residues: 4-diphosphocytidyl-2-C-methyl-D-erythritol kinase (289 aa).

Residue lysine 13 is part of the active site. 101–111 (PMGGGLGGGSS) provides a ligand contact to ATP. Aspartate 143 is an active-site residue.

The protein belongs to the GHMP kinase family. IspE subfamily.

The enzyme catalyses 4-CDP-2-C-methyl-D-erythritol + ATP = 4-CDP-2-C-methyl-D-erythritol 2-phosphate + ADP + H(+). It participates in isoprenoid biosynthesis; isopentenyl diphosphate biosynthesis via DXP pathway; isopentenyl diphosphate from 1-deoxy-D-xylulose 5-phosphate: step 3/6. Catalyzes the phosphorylation of the position 2 hydroxy group of 4-diphosphocytidyl-2C-methyl-D-erythritol. The polypeptide is 4-diphosphocytidyl-2-C-methyl-D-erythritol kinase (Janthinobacterium sp. (strain Marseille) (Minibacterium massiliensis)).